The chain runs to 410 residues: MSDLLDTVRGLAKKTDSKILMVVLDGVGGLPLTVNGDTELATARTPNLDALAQESQLGQLELVGAGITPGSGPGHLSLFGYDPLKYVVGRGALSAVGIGVKLNRGDVAVRGNFATLGAGRLILDRRAGRPSDEKNAEIVAKLRAAIPEIDGVAVEVYTESEHRFVVVFRAPEGQPLGANISDVDPQVTGVEPKTAIANDPSSEVTAGLINTFVARAEVALADEPQVNGVLFRGYSDVPHFPSFEDAYQLKAACIASYPMYKGLASLVGMDVLPVEGHEDALEGKVKALRENWAKYDFFYFHIKKTDSTGEDGDFAEKVHKIELFDELLPQLLELQPDVIAVVGDHSTPSKLKSHSWHPVPLLIRSNYGRRDPAQRYTEEEAARGTLGLRHGPDLMPLLMANALKLNKYGA.

The protein belongs to the BPG-independent phosphoglycerate mutase family. A-PGAM subfamily.

It catalyses the reaction (2R)-2-phosphoglycerate = (2R)-3-phosphoglycerate. The protein operates within carbohydrate degradation; glycolysis; pyruvate from D-glyceraldehyde 3-phosphate: step 3/5. Catalyzes the interconversion of 2-phosphoglycerate and 3-phosphoglycerate. This is Probable 2,3-bisphosphoglycerate-independent phosphoglycerate mutase from Deinococcus radiodurans (strain ATCC 13939 / DSM 20539 / JCM 16871 / CCUG 27074 / LMG 4051 / NBRC 15346 / NCIMB 9279 / VKM B-1422 / R1).